Consider the following 911-residue polypeptide: Valine--tRNA ligase (911 aa).

A 'HIGH' region motif is present at residues proline 57–histidine 67. A 'KMSKS' region motif is present at residues lysine 599–serine 603. ATP is bound at residue lysine 602. The segment at glutamate 882–histidine 911 is disordered.

The protein belongs to the class-I aminoacyl-tRNA synthetase family. ValS type 2 subfamily. Monomer.

The protein resides in the cytoplasm. The catalysed reaction is tRNA(Val) + L-valine + ATP = L-valyl-tRNA(Val) + AMP + diphosphate. Catalyzes the attachment of valine to tRNA(Val). As ValRS can inadvertently accommodate and process structurally similar amino acids such as threonine, to avoid such errors, it has a 'posttransfer' editing activity that hydrolyzes mischarged Thr-tRNA(Val) in a tRNA-dependent manner. This Bifidobacterium longum (strain NCC 2705) protein is Valine--tRNA ligase.